The chain runs to 472 residues: Tryptophan--tRNA ligase, cytoplasmic (472 aa).

The WHEP-TRS domain occupies 9 to 65 (SPLELFNSIATQGELVRSLKAGNASKDEIDSAVKMLLSLKMSYKAAMGEDYKANCPP). Position 155 is an N6-succinyllysine (Lys155). Residues 165–174 (PSSEAMHVGH) carry the 'HIGH' region motif. A 'KMSKS' region motif is present at residues 350 to 354 (KMSAS). The residue at position 352 (Ser352) is a Phosphoserine.

Belongs to the class-I aminoacyl-tRNA synthetase family. In terms of assembly, homodimer. Interacts with oxidized form of GAPDH. In terms of processing, proteolytic cleavage generates 2 forms; T1-TrpRS and T2-TrpRS.

The protein resides in the cytoplasm. It catalyses the reaction tRNA(Trp) + L-tryptophan + ATP = L-tryptophyl-tRNA(Trp) + AMP + diphosphate + H(+). Catalyzes the attachment of tryptophan to tRNA(Trp) in a two-step reaction: tryptophan is first activated by ATP to form Trp-AMP and then transferred to the acceptor end of the tRNA(Trp). Could also possess an angiostatic activity. The protein is Tryptophan--tRNA ligase, cytoplasmic (WARS1) of Pongo abelii (Sumatran orangutan).